The following is a 325-amino-acid chain: tRNA pseudouridine synthase B (325 aa).

The active-site Nucleophile is the D49.

The protein belongs to the pseudouridine synthase TruB family. Type 1 subfamily.

It carries out the reaction uridine(55) in tRNA = pseudouridine(55) in tRNA. Functionally, responsible for synthesis of pseudouridine from uracil-55 in the psi GC loop of transfer RNAs. The polypeptide is tRNA pseudouridine synthase B (Mesorhizobium japonicum (strain LMG 29417 / CECT 9101 / MAFF 303099) (Mesorhizobium loti (strain MAFF 303099))).